A 137-amino-acid chain; its full sequence is Large ribosomal subunit protein uL16 (137 aa).

Belongs to the universal ribosomal protein uL16 family. In terms of assembly, part of the 50S ribosomal subunit.

In terms of biological role, binds 23S rRNA and is also seen to make contacts with the A and possibly P site tRNAs. This chain is Large ribosomal subunit protein uL16, found in Alkalilimnicola ehrlichii (strain ATCC BAA-1101 / DSM 17681 / MLHE-1).